A 437-amino-acid polypeptide reads, in one-letter code: Xylose isomerase (437 aa).

Residues H101 and D104 contribute to the active site. Mg(2+)-binding residues include E232, E268, H271, D296, D307, D309, and D339.

This sequence belongs to the xylose isomerase family. As to quaternary structure, homotetramer. Mg(2+) is required as a cofactor.

The protein localises to the cytoplasm. It catalyses the reaction alpha-D-xylose = alpha-D-xylulofuranose. This is Xylose isomerase from Mannheimia succiniciproducens (strain KCTC 0769BP / MBEL55E).